Reading from the N-terminus, the 333-residue chain is MKKIAIDAMGGENAPKAIIDAVLKAKPKLKDIEFILFGDAEKINQLIPNEQKERIEVVATSEVIVDSDEPVRAIRRKKDSSMVVAANYVKAGKADALFSLGNTGALLACGIFIIGRIKGVERPALMPTLPSAKSEQGFNIIDVGANAQSKPEYLVQWAQMANFYAQKVRNIQNPTVALLNNGAEDDKGDPLHQEAYKLLKETKLNFIGNVEGNDLMEGKADVIVTDGFTGNATLKAIEGTASVILRLLKDSLLNNGLRPKVGALLAKPGLTALKKRFDTARYGGAVLLGVNAPVVKTHGRSNIRPIYYTLLQIDKMLSQDLVGEYKKYFSESR.

It belongs to the PlsX family. Homodimer. Probably interacts with PlsY.

Its subcellular location is the cytoplasm. The catalysed reaction is a fatty acyl-[ACP] + phosphate = an acyl phosphate + holo-[ACP]. The protein operates within lipid metabolism; phospholipid metabolism. In terms of biological role, catalyzes the reversible formation of acyl-phosphate (acyl-PO(4)) from acyl-[acyl-carrier-protein] (acyl-ACP). This enzyme utilizes acyl-ACP as fatty acyl donor, but not acyl-CoA. This is Phosphate acyltransferase from Lactobacillus gasseri (strain ATCC 33323 / DSM 20243 / BCRC 14619 / CIP 102991 / JCM 1131 / KCTC 3163 / NCIMB 11718 / NCTC 13722 / AM63).